The chain runs to 697 residues: Polyribonucleotide nucleotidyltransferase (697 aa).

Residues D488 and D494 each contribute to the Mg(2+) site. The KH domain occupies 555-614 (PTFEVITINPDKIRDVIGKGGATIRQITEETKAAIDIEDNGTVRVFGETKAAARAAIAKI). Residues 624 to 692 (GKIYDGKVIR…NRGRIKLSMK (69 aa)) enclose the S1 motif domain.

The protein belongs to the polyribonucleotide nucleotidyltransferase family. Component of the RNA degradosome, which is a multiprotein complex involved in RNA processing and mRNA degradation. The cofactor is Mg(2+).

Its subcellular location is the cytoplasm. The enzyme catalyses RNA(n+1) + phosphate = RNA(n) + a ribonucleoside 5'-diphosphate. Functionally, involved in mRNA degradation. Catalyzes the phosphorolysis of single-stranded polyribonucleotides processively in the 3'- to 5'-direction. In Acinetobacter baylyi (strain ATCC 33305 / BD413 / ADP1), this protein is Polyribonucleotide nucleotidyltransferase.